Here is a 914-residue protein sequence, read N- to C-terminus: MVGLEDDTERERSPVVENGFSNGSRSSSSSAGVLSPSRKVTQGNDTLSYANILRARNKFADALALYEAMLEKDSKNVEAHIGKGICLQTQNKGNLAFDCFSEAIRLDPHNACALTHCGILHKEEGRLVEAAESYQKALMADASYKPAAECLAIVLTDLGTSLKLAGNTQEGIQKYYEALKIDPHYAPAYYNLGVVYSEMMQYDNALSCYEKAALERPMYAEAYCNMGVIYKNRGDLEMAITCYERCLAVSPNFEIAKNNMAIALTDLGTKVKLEGDVTQGVAYYKKALYYNWHYADAMYNLGVAYGEMLKFDMAIVFYELAFHFNPHCAEACNNLGVLYKDRDNLDKAVECYQMALSIKPNFAQSLNNLGVVYTVQGKMDAAASMIEKAILANPTYAEAFNNLGVLYRDAGNITMAIDAYEECLKIDPDSRNAGQNRLLAMNYINEGLDDKLFEAHRDWGWRFTRLHPQYTSWDNLKDPERPITIGYISPDFFTHSVSYFIEAPLTHHDYTKYKVVVYSAVVKADAKTYRFRDKVLKKGGVWKDIYGIDEKKIASMVREDKIDILVELTGHTANNKLGTMACRPAPVQVTWIGYPNTTGLPTVDYRITDSLADPPDTKQKQVEELVRLPDCFLCYTPSPEAGPVCPTPALSNGFVTFGSFNNLAKITPKVLQVWARILCAVPNSRLVVKCKPFCCDSIRQRFLTTLEQLGLESKRVDLLPLILFNHDHMQAYSLMDISLDTFPYAGTTTTCESLYMGVPCVTMAGSVHAHNVGVSLLTKVGLGHLVAKNEDEYVQLSVDLASDVTALSKLRMSLRDLMAGSPVCNGPSFAVGLESAYRNMWKKYCKGEVPSLRRMEMLQKEVHDDPLISKDLGPSRVSVTGEATPSLKANGSAPVPSSLPTQSPQLSKRMDSTS.

Residues 1-39 form a disordered region; it reads MVGLEDDTERERSPVVENGFSNGSRSSSSSAGVLSPSRK. Over residues 19–37 the composition is skewed to low complexity; sequence GFSNGSRSSSSSAGVLSPS. A Phosphoserine modification is found at Ser-35. TPR repeat units lie at residues 43 to 76, 77 to 110, 112 to 144, 152 to 185, 186 to 219, 220 to 253, 261 to 294, 295 to 328, 329 to 362, 364 to 396, and 397 to 430; these read GNDT…DSKN, VEAH…DPHN, CALT…DASY, AIVL…DPHY, APAY…RPMY, AEAY…SPNF, AIAL…NWHY, ADAM…NPHC, AEAC…KPNF, QSLN…NPTY, and AEAF…DPDS. Residues 431 to 914 are catalytic region; that stretch reads RNAGQNRLLA…QLSKRMDSTS (484 aa). The tract at residues 866-914 is disordered; it reads PLISKDLGPSRVSVTGEATPSLKANGSAPVPSSLPTQSPQLSKRMDSTS. Polar residues predominate over residues 877-889; it reads VSVTGEATPSLKA. The segment covering 894-907 has biased composition (low complexity); it reads PVPSSLPTQSPQLS.

This sequence belongs to the glycosyltransferase 41 family. O-GlcNAc transferase subfamily. Homomultimer; via its TPR repeats. Interacts with GI. Interacts with TCP14 and TCP15. Interacts (via N-terminus) with APRR5. Interacts with CPN20. As to expression, widely expressed. Present throughout the plant (at protein level).

It is found in the cytoplasm. Its subcellular location is the nucleus. The enzyme catalyses L-seryl-[protein] + UDP-N-acetyl-alpha-D-glucosamine = 3-O-(N-acetyl-beta-D-glucosaminyl)-L-seryl-[protein] + UDP + H(+). It catalyses the reaction L-threonyl-[protein] + UDP-N-acetyl-alpha-D-glucosamine = 3-O-(N-acetyl-beta-D-glucosaminyl)-L-threonyl-[protein] + UDP + H(+). It carries out the reaction L-seryl-[protein] + GDP-beta-L-fucose = 3-O-(alpha-L-fucosyl)-L-seryl-[protein] + GDP + H(+). The catalysed reaction is L-threonyl-[protein] + GDP-beta-L-fucose = 3-O-(alpha-L-fucosyl)-L-threonyl-[protein] + GDP + H(+). It functions in the pathway protein modification; protein glycosylation. In terms of biological role, probable O-linked N-acetylglucosamine transferase (OGT) involved in various processes such as gibberellin (GA) signaling pathway and circadian clock. OGTs catalyze the addition of nucleotide-activated sugars directly onto the polypeptide through O-glycosidic linkage with the hydroxyl of serine or threonine. Probably acts by adding O-linked sugars to yet unknown proteins. Acts as a repressor of GA signaling pathway to inhibit hypocotyl elongation. Functions with GIGANTEA (GI) in pathways controlling flowering, circadian cotyledon movements and hypocotyl elongation. Acts as a light-regulated promoter of elongation via its interaction with GI. Acts as an activator of cytokinin signaling. Required with SEC for gamete and seed development. Its OGT activity has been proved in vitro but not in vivo. Possesses O-fucosyltransferase activity on specific serine and threonine residues. Mediates O-fucosylation of the DELLA protein RGA, a repressor of the GA signaling pathway. O-fucosylation enhances RGA activity by promoting RGA binding to key transcription factors in brassinosteroid and light-signaling pathways. Regulates root hair patterning upstream of the transcription factor WER, independently of DELLA proteins and GA signaling. Involved in abscisic acid (ABA) signaling partly through functional ABAR. Mediates O-fucosylation of CPN20 that may depress ABA responses during seed germination and seedling development. Involved in the modulation of the pace of the circadian clock by mediating O-fucosylation of APRR5, one of the core circadian clock components. O-fucosylation promotes APRR5 proteolysis. In Arabidopsis thaliana (Mouse-ear cress), this protein is Probable UDP-N-acetylglucosamine--peptide N-acetylglucosaminyltransferase SPINDLY.